Reading from the N-terminus, the 451-residue chain is Ubiquitin hydrolase B (451 aa).

Residues 19–450 form the USP domain; the sequence is RGLINTSNTC…EAYLLLYQLV (432 aa). The segment covering 83-115 has biased composition (low complexity); that stretch reads NNSNSTTTTSSSSTTATTTSTSNNNKSQTPTSP. Residues 83–154 form a disordered region; sequence NNSNSTTTTS…PPINPKHFND (72 aa). Residues 116 to 135 are compositionally biased toward polar residues; that stretch reads IQQHHQSQTNGLSNQPSVAT. H399 serves as the catalytic Nucleophile. H408 acts as the Proton acceptor in catalysis.

The protein belongs to the peptidase C19 family. Interacts with mkkA (via F-box/WD40 domains).

The catalysed reaction is Thiol-dependent hydrolysis of ester, thioester, amide, peptide and isopeptide bonds formed by the C-terminal Gly of ubiquitin (a 76-residue protein attached to proteins as an intracellular targeting signal).. Functionally, required for proper prespore cell patterning. Plays a role in stabilizing mkkA by preventing it from being targeted for degradation. ubcB and ubpB differentially control ubiquitination/deubiquitination and degradation of mkkA in a cell-type-specific and temporally regulated manner. The chain is Ubiquitin hydrolase B (ubpB) from Dictyostelium discoideum (Social amoeba).